The primary structure comprises 370 residues: Cytochrome b (370 aa).

4 consecutive transmembrane segments (helical) span residues 30–50 (FGSM…FLAF), 74–96 (WVFR…LHIF), 109–129 (VWMS…MGYV), and 175–195 (FFVL…GHLI). The heme b site is built by H80 and H94. Heme b is bound by residues H179 and H193. H198 serves as a coordination point for a ubiquinone. Transmembrane regions (helical) follow at residues 221–240 (YLGK…VLSL), 284–304 (VLGV…ALVN), 316–336 (FLVF…QCTV), and 342–362 (ILSP…LFIF).

Belongs to the cytochrome b family. In terms of assembly, the main subunits of complex b-c1 are: cytochrome b, cytochrome c1 and the Rieske protein. Heme b is required as a cofactor.

It is found in the mitochondrion inner membrane. Its function is as follows. Component of the ubiquinol-cytochrome c reductase complex (complex III or cytochrome b-c1 complex) that is part of the mitochondrial respiratory chain. The b-c1 complex mediates electron transfer from ubiquinol to cytochrome c. Contributes to the generation of a proton gradient across the mitochondrial membrane that is then used for ATP synthesis. The chain is Cytochrome b from Caenorhabditis elegans.